A 452-amino-acid polypeptide reads, in one-letter code: Keratin, type II cytoskeletal 80 (452 aa).

The interval 1 to 82 (MAYRSCVVGF…DPAVQQQKNQ (82 aa)) is head. Position 45 is a phosphoserine (Ser-45). A coil 1A region spans residues 82–118 (QEKEEMKALNDKFASLIGKVQALEQRNQLLETRWSFL). The 312-residue stretch at 83–394 (EKEEMKALND…KLMEGEESRM (312 aa)) folds into the IF rod domain. Residues 119 to 135 (QGQGSATFDLSHHYETF) are linker 1. The tract at residues 136 to 227 (QGRLQEELRK…TVYEQELKDL (92 aa)) is coil 1B. A linker 12 region spans residues 228–251 (TAQVKDVSVTVGLDSRCHIDLSGI). The coil 2 stretch occupies residues 252–390 (VEEVKAQYDA…ATYHKLMEGE (139 aa)). A tail region spans residues 391–452 (ESRMDLPSAT…YLSQESEASE (62 aa)). The tract at residues 412-452 (TASKSGLTKTSSRKKKNRRGPVIKITEMSEKYLSQESEASE) is disordered. Residues 422–432 (SSRKKKNRRGP) are compositionally biased toward basic residues. Polar residues predominate over residues 443 to 452 (YLSQESEASE).

Belongs to the intermediate filament family. As to quaternary structure, heterotetramer of two type I and two type II keratins.

The chain is Keratin, type II cytoskeletal 80 (Krt80) from Mus musculus (Mouse).